The sequence spans 330 residues: D-lactate dehydrogenase (330 aa).

NAD(+) contacts are provided by residues 156–157 (RI), Asp-176, 206–207 (VP), 233–235 (AAR), and Asp-259. Residue Arg-235 is part of the active site. Glu-264 is a catalytic residue. The Proton donor role is filled by His-296.

This sequence belongs to the D-isomer specific 2-hydroxyacid dehydrogenase family.

The catalysed reaction is (R)-lactate + NAD(+) = pyruvate + NADH + H(+). The polypeptide is D-lactate dehydrogenase (ldhD) (Staphylococcus aureus).